The chain runs to 360 residues: Protein NDRG2 (360 aa).

A disordered region spans residues 325–360 (RTASLSSEGNRSRSRTLSQSSESGGGPPAPLAEVTC).

This sequence belongs to the NDRG family.

The protein localises to the cytoplasm. Its function is as follows. Contributes to the regulation of the Wnt signaling pathway. Down-regulates CTNNB1-mediated transcriptional activation of target genes. May be involved in neuron differentiation. The polypeptide is Protein NDRG2 (Xenopus tropicalis (Western clawed frog)).